The following is a 736-amino-acid chain: MNSKIAYPEIKISGAFRPDKIQEKGKSNRCDTHCSGSSWTSFKSKILKICAPLCCMGSDNDESMAEMPLEPQVEPKSIENNYTLKKKNEEGFLSQQENKSSNQNPSKANNLFDKLGVSKPITFIACILQLGGTSFMESELQTKLSTINSSPFKSLSQYWNAAYNKKESISSSTNSNIKLHLAARKYQTKPEKFNENSSISQVTSAIKATKAFSHLTQPKRALLKESNTGDKDIFKPRYPQLLSCRFTTLSKLAPINNSKSAPKGTHKPNHSENAELKDIKQSSELSDLSLSSQILYPESTTLSEISPIYDSELAIENILESKCFENEQAIIEGVKDFTEFPDLEETQIIYSDLIASSEVSPIYDSELKYESVLESKSSRNEQATIKEKKDNERVLDLSQQCTKFLFSDQKVITPSFCKFAQVSDMCSTEIPWVNFFCDNLDICIEDVQFKSKAFFPPTVTITIFEHEDKNLMNVFDTKNGTSKTLVKPQITNSCLENMLSLVNKNSCIKRLHLKLSKGIMDIKVLTHQLMLYDLYPPAHQTYLWKALERLVNEKVSLGELTPVHKVAAEKRIGDIRMHLIESSDIYVVTENHRWLHIVCEGFNCFLELPEVLHGKKFLKVDEATREDMLMSAETPDDILWITTLISTGSSMSHFPLHAYLEAKERQEFTKKNLLLFCKEDEFLYSDQENEDLLESFERVISEELSLLKSNEPSDISLKKRKRRKNCEKRILGTMMY.

This sequence belongs to the UPF0300 family.

The polypeptide is Meiotic expression up-regulated protein 27 (meu27) (Schizosaccharomyces pombe (strain 972 / ATCC 24843) (Fission yeast)).